Consider the following 61-residue polypeptide: ERMES regulator 1 (61 aa).

Residues 1-20 (MLPNLRRIFASFRTEEEERS) are Mitochondrial intermembrane-facing. A helical membrane pass occupies residues 21–43 (YSRKAFFHLIGYITCSVLFSWLV). Over 44–61 (RKKVISSPVVSSPIHALS) the chain is Cytoplasmic.

This sequence belongs to the EMR1 family. As to quaternary structure, interacts with the ER-mitochondria encounter structure (ERMES) complex. Interacts with mdm12. Interacts with mdm34.

The protein localises to the mitochondrion outer membrane. In terms of biological role, mediates the formation of endoplasmic reticulum (ER)-mitochondria encounter structure (ERMES) foci, thereby contributing to the formation of ER-mitochondrial contact sites. This Schizosaccharomyces pombe (strain 972 / ATCC 24843) (Fission yeast) protein is ERMES regulator 1.